A 626-amino-acid polypeptide reads, in one-letter code: MPSSHDWINKPLGVVEAMFAQNNSNPEWEEKVLEYFRGQLKEKESLSWVPSLNDVPLHYLKPNSLVKFRCLVQDMFDPEFYMGVYETVDPSTKTNVLRCGKYKDVTECGVDLNSRNTVTAERQTFYCVPIPGESPWAKESYGCSSQARVVPSTSYVPSRQKRSYEEDDDDMDTQPQKQREPHTEPHGNGDSKRQETEAPSSQTTAPSDCSSHLDLNFPLPGERGPACLVKVYEGLDSFKLNDTLEIYGILSVNPVLTVLGEEKDPSSLLLNPSESMESPEEQRAHDPPASLVPRLHMLYARPLQHNNPLLPSAPTEDHSAFVSSFLVEMASVRAELLAYLTHVLLGDGLAAEYLLLHLISNVYTRRDVLPLGKFTLNLSGCPLNSYTERLYQIIQQLVPCSYRLSMSLHTMNSMRLVPKKDYVANRLVSGALQLARNTSLFLDETQLEQGQLDSSGVRNITALGNLISWQKVDYDFSYHQMEFPCNINVLVTSEGRSLLPSDCQVPLQPQVTPPNMEEYLTTIHMAQFTSQMNKFRVYLSLARTLDYSISDEVTKAVEDDFVDMRKDDPQSVTAEDLHRMLVVARLLSLSMGQTTLSRDGWMRAKHIDMLRRSRTEQQKSLNSNEP.

Disordered regions lie at residues 152–216 (STSY…LDLN) and 265–287 (PSSLLLNPSESMESPEEQRAHDP). Positions 177–196 (KQREPHTEPHGNGDSKRQET) are enriched in basic and acidic residues. Over residues 197–210 (EAPSSQTTAPSDCS) the composition is skewed to polar residues.

This sequence belongs to the MCMBP family. In terms of assembly, interacts with the mcm complex: associates with the mcm3-7 complex which lacks mcm2, while it does not interact with the mcm complex when mcm2 is present (mcm2-7 complex).

It localises to the nucleus. Functionally, associated component of the mcm complex that acts as a regulator of DNA replication. Binds to the MCM complex during late S phase and promotes the disassembly of the mcm complex from chromatin, thereby acting as a key regulator of pre-replication complex (pre-RC) unloading from replicated DNA. Can dissociate the mcm complex without addition of ATP; probably acts by destabilizing interactions of each individual subunits of the mcm complex. Required for sister chromatid cohesion. In Salmo salar (Atlantic salmon), this protein is Mini-chromosome maintenance complex-binding protein (mcmbp).